The chain runs to 432 residues: Maltoporin (432 aa).

The N-terminal stretch at 1–22 is a signal peptide; that stretch reads MKKVSVIAAAVAATLAAGSAFA.

It belongs to the porin LamB (TC 1.B.3) family. Homotrimer formed of three 18-stranded antiparallel beta-barrels, containing three independent channels.

It localises to the cell outer membrane. The enzyme catalyses beta-maltose(in) = beta-maltose(out). In terms of biological role, involved in the transport of maltose and maltodextrins. This chain is Maltoporin, found in Vibrio parahaemolyticus serotype O3:K6 (strain RIMD 2210633).